A 1574-amino-acid chain; its full sequence is Multiple epidermal growth factor-like domains protein 6 (1574 aa).

The N-terminal stretch at 1–27 (MPVRAEARAAWRVVALALLLLPAMPAA) is a signal peptide. Residues 40-122 (MPHVCAEQKL…QKPGQEGCLS (83 aa)) enclose the EMI domain. Disulfide bonds link cysteine 44–cysteine 108, cysteine 74–cysteine 80, cysteine 107–cysteine 120, cysteine 127–cysteine 138, cysteine 134–cysteine 147, cysteine 149–cysteine 162, cysteine 168–cysteine 179, cysteine 175–cysteine 188, cysteine 190–cysteine 203, cysteine 209–cysteine 220, cysteine 216–cysteine 230, cysteine 232–cysteine 245, cysteine 251–cysteine 262, cysteine 258–cysteine 271, cysteine 273–cysteine 286, cysteine 292–cysteine 303, cysteine 299–cysteine 312, cysteine 314–cysteine 327, cysteine 338–cysteine 349, cysteine 345–cysteine 358, cysteine 360–cysteine 373, cysteine 379–cysteine 389, cysteine 385–cysteine 398, cysteine 400–cysteine 411, cysteine 419–cysteine 430, cysteine 426–cysteine 439, cysteine 441–cysteine 454, cysteine 524–cysteine 537, cysteine 531–cysteine 544, cysteine 546–cysteine 555, cysteine 568–cysteine 580, cysteine 574–cysteine 587, cysteine 589–cysteine 598, cysteine 611–cysteine 623, cysteine 617–cysteine 630, cysteine 632–cysteine 641, cysteine 654–cysteine 668, cysteine 660–cysteine 675, cysteine 677–cysteine 686, cysteine 699–cysteine 711, cysteine 705–cysteine 718, cysteine 722–cysteine 731, cysteine 744–cysteine 755, cysteine 750–cysteine 762, cysteine 764–cysteine 773, cysteine 786–cysteine 799, cysteine 793–cysteine 806, cysteine 808–cysteine 817, cysteine 830–cysteine 842, cysteine 836–cysteine 849, cysteine 851–cysteine 860, cysteine 873–cysteine 886, cysteine 879–cysteine 893, cysteine 895–cysteine 904, cysteine 917–cysteine 929, cysteine 923–cysteine 936, cysteine 938–cysteine 947, cysteine 960–cysteine 972, cysteine 966–cysteine 979, cysteine 981–cysteine 990, cysteine 1003–cysteine 1015, cysteine 1009–cysteine 1022, cysteine 1024–cysteine 1033, cysteine 1046–cysteine 1058, cysteine 1052–cysteine 1065, cysteine 1067–cysteine 1076, cysteine 1089–cysteine 1101, cysteine 1095–cysteine 1108, cysteine 1110–cysteine 1119, cysteine 1132–cysteine 1144, cysteine 1138–cysteine 1151, cysteine 1153–cysteine 1162, cysteine 1175–cysteine 1187, cysteine 1181–cysteine 1194, cysteine 1196–cysteine 1205, cysteine 1218–cysteine 1231, cysteine 1224–cysteine 1238, cysteine 1240–cysteine 1249, cysteine 1262–cysteine 1274, cysteine 1268–cysteine 1281, cysteine 1283–cysteine 1292, cysteine 1305–cysteine 1317, cysteine 1311–cysteine 1324, cysteine 1326–cysteine 1335, cysteine 1348–cysteine 1360, cysteine 1354–cysteine 1367, cysteine 1369–cysteine 1378, cysteine 1391–cysteine 1403, cysteine 1397–cysteine 1410, cysteine 1412–cysteine 1421, cysteine 1434–cysteine 1446, cysteine 1440–cysteine 1453, cysteine 1455–cysteine 1464, cysteine 1477–cysteine 1489, cysteine 1483–cysteine 1496, cysteine 1498–cysteine 1507, cysteine 1520–cysteine 1532, cysteine 1526–cysteine 1539, and cysteine 1541–cysteine 1550. The EGF-like 1; calcium-binding domain occupies 123-163 (DVDECASANGGCEGPCCNTVGGFYCRCPPGYQLQGDGKTCQ). One can recognise an EGF-like 2; calcium-binding domain in the interval 164–204 (DVDECRAHNGGCQHRCVNTPGSYLCECKPGFRLHTDGRTCL). 2 EGF-like domains span residues 205–246 (AISS…RRCV) and 247–287 (RRSP…KTCE). The EGF-like 5; calcium-binding domain occupies 288 to 328 (DVDECALGLAQCAHGCLNTQGSFKCVCHAGYELGADGRQCY). 2 EGF-like domains span residues 334–374 (IVNS…KTCI) and 375–412 (DIDD…DGCG). The region spanning 415 to 455 (DVDECASGHGGCEHHCSNLAGSFQCFCEAGYRLDEDRRGCT) is the EGF-like 8; calcium-binding domain. EGF-like domains lie at 520 to 556 (FGHD…IICN), 564 to 599 (FGKN…AHCE), 607 to 642 (YGKH…RFCH), 650 to 687 (FGPG…ERCQ), 695 to 732 (FGPG…EDCG), 740 to 774 (FGVN…EDCG), 782 to 818 (WGLG…SRCQ), 826 to 861 (YGTG…LSCQ), 869 to 905 (WGPD…PRCE), 913 to 948 (YGPS…SFCE), 956 to 991 (FGLD…PRCA), 999 to 1034 (FGLN…PTCL), 1042 to 1077 (YGKN…LACE), 1085 to 1120 (YAAG…DKCQ), 1128 to 1163 (FGVH…PHCE), 1171 to 1206 (FGEA…LSCE), 1214 to 1250 (FGKD…TGCL), 1258 to 1293 (YGPG…ADCS), 1301 to 1336 (FGPS…VRCE), 1344 to 1379 (FGKG…PHCE), 1387 to 1422 (YGAA…QACE), 1430 to 1465 (HGPG…QFCE), 1473 to 1508 (FGDG…AACD), and 1516 to 1551 (FGPG…PTCR). The span at 1555-1568 (TQISSSRPAPQHPS) shows a compositional bias: polar residues. The segment at 1555–1574 (TQISSSRPAPQHPSSRAMKH) is disordered.

Expressed in lung.

It localises to the secreted. The protein is Multiple epidermal growth factor-like domains protein 6 (Megf6) of Rattus norvegicus (Rat).